The chain runs to 580 residues: Mucolipin-1 (580 aa).

The segment at methionine 1–glutamate 38 is disordered. The Cytoplasmic segment spans residues methionine 1 to lysine 65. Serine 10 is modified (phosphoserine). The short motif at glutamate 11 to leucine 16 is the Dileucine motif; mediates targeting to lysosomes element. Residues arginine 42–lysine 62 are interaction with phosphoinositides. The chain crosses the membrane as a helical span at residues leucine 66–serine 86. Residues asparagine 87–arginine 298 are Extracellular-facing. The segment at leucine 107 to threonine 121 is extracellular/lumenal pore loop. A disulfide bridge connects residues cysteine 166 and cysteine 192. N-linked (GlcNAc...) asparagine glycosylation is found at asparagine 220 and asparagine 230. The cysteines at positions 253 and 284 are disulfide-linked. Residues leucine 299–leucine 321 form a helical membrane-spanning segment. The Cytoplasmic segment spans residues arginine 322–phenylalanine 350. The chain crosses the membrane as a helical span at residues valine 351–methionine 371. At lysine 372–serine 382 the chain is on the extracellular side. The helical transmembrane segment at tyrosine 383–leucine 405 threads the bilayer. The Cytoplasmic portion of the chain corresponds to threonine 406–arginine 427. Residues phenylalanine 428–glycine 448 traverse the membrane as a helical segment. At proline 449 to serine 456 the chain is on the extracellular side. Residues leucine 457–phenylalanine 477 constitute an intramembrane region (pore-forming). Residues asparagine 469–phenylalanine 474 carry the Selectivity filter motif. Residues alanine 478–tryptophan 491 are Extracellular-facing. The chain crosses the membrane as a helical span at residues leucine 492–phenylalanine 513. Residues isoleucine 514–asparagine 580 lie on the Cytoplasmic side of the membrane. The residue at position 557 (serine 557) is a Phosphoserine. Phosphoserine; by PAK is present on serine 559. The tract at residues cysteine 565–cysteine 567 is required for palmitoylation and association with membranes. The Dileucine internalization motif; mediates AP2 complex-dependent internalization motif lies at glutamate 573 to leucine 578.

It belongs to the transient receptor (TC 1.A.4) family. Polycystin subfamily. MCOLN1 sub-subfamily. In terms of assembly, homotetramer. Homooligomer. Can heterooligomerize with MCOLN2 or MCOLN3; heteromeric assemblies have different channel properties as compared to the respective homooligomers and may be tissue-specific. Interacts with PDCD6. Interacts with TMEM163. Interacts with LAPTM4B. In terms of processing, palmitoylated; involved in association with membranes. Post-translationally, phosphorylation by PKA inhibits channel activity. Dephosphorylation increases activity. Proteolytically cleaved probably involving multiple lysosomal proteases including cathepsin B; inhibits lysosomal channel activity. Widely expressed, with the highest expression in brain, liver and kidney.

The protein resides in the late endosome membrane. It is found in the lysosome membrane. The protein localises to the cytoplasmic vesicle membrane. Its subcellular location is the cell projection. It localises to the phagocytic cup. The protein resides in the cytoplasmic vesicle. It is found in the phagosome membrane. The protein localises to the cell membrane. The enzyme catalyses Ca(2+)(in) = Ca(2+)(out). The catalysed reaction is Fe(2+)(in) = Fe(2+)(out). It carries out the reaction Mg(2+)(in) = Mg(2+)(out). It catalyses the reaction K(+)(in) = K(+)(out). The enzyme catalyses Na(+)(in) = Na(+)(out). Its activity is regulated as follows. Channel activity is controlled by multiple regulatory mechanisms in different subcellular compartments. Lower pH by itself has an inhibitory effect on channel conductance. Channel function is transiently modulated by changes in Ca(2+) in a pH-dependent manner; pH changes modify the aggregation state of unitary channels; a negative cooperativity between extracellular/lumenal Ca(2+) and H(+) is suggested. Fe(2+) channel activity is potentiated by low pH. Regulated by phosphoinositides in a compartment-specific manner: in lysosomes activated by PtdIns(3,5)P2 (Phosphatidylinositol 3,5-bisphosphate) and at the plasma membrane inhibited by PtdIns(4,5)P2 (Phosphatidylinositol 4,5-bisphosphate). Nonselective cation channel probably playing a role in the regulation of membrane trafficking events and of metal homeostasis. Acts as a Ca(2+)-permeable cation channel with inwardly rectifying activity. Proposed to play a major role in Ca(2+) release from late endosome and lysosome vesicles to the cytoplasm, which is important for many lysosome-dependent cellular events, including the fusion and trafficking of these organelles, exocytosis and autophagy. Required for efficient uptake of large particles in macrophages in which Ca(2+) release from the lysosomes triggers lysosomal exocytosis. May also play a role in phagosome-lysosome fusion. Involved in lactosylceramide trafficking indicative for a role in the regulation of late endocytic membrane fusion/fission events. By mediating lysosomal Ca(2+) release is involved in regulation of mTORC1 signaling and in mTOR/TFEB-dependent lysosomal adaptation to environmental cues such as nutrient levels. Seems to act as lysosomal active oxygen species (ROS) sensor involved in ROS-induced TFEB activation and autophagy. Also functions as a Fe(2+) permeable channel in late endosomes and lysosomes. Also permeable to Mg(2+), Na(+). K(+) and Cs(+). Proposed to play a role in zinc homeostasis probably implicating its association with TMEM163. In adaptive immunity, TRPML2 and TRPML1 may play redundant roles in the function of the specialized lysosomes of B cells. Functionally, may contribute to cellular lipase activity within the late endosomal pathway or at the cell surface which may be involved in processes of membrane reshaping and vesiculation, especially the growth of tubular structures. However, it is not known, whether it conveys the enzymatic activity directly, or merely facilitates the activity of an associated phospholipase. In Mus musculus (Mouse), this protein is Mucolipin-1.